A 253-amino-acid chain; its full sequence is Regulatory protein VirG (253 aa).

Positions 15–129 constitute a Response regulatory domain; it reads HVLVIDDDVA…EFLARIRVAL (115 aa). Aspartate 64 carries the 4-aspartylphosphate modification. Positions 141–241 form a DNA-binding region, ompR/PhoB-type; it reads RRSFSFADWT…ARGAGYFFDA (101 aa).

In terms of processing, phosphorylated by wide host range (WHR) VirA protein.

It localises to the cytoplasm. Functionally, virG is required for the positive regulation of at least two vir loci encoded by the Ti plasmid of A.tumefaciens. This chain is Regulatory protein VirG (virG), found in Agrobacterium fabrum (strain C58 / ATCC 33970) (Agrobacterium tumefaciens (strain C58)).